The following is a 325-amino-acid chain: 4-hydroxy-3-methylbut-2-enyl diphosphate reductase (325 aa).

Residue cysteine 21 coordinates [4Fe-4S] cluster. Residues histidine 50 and histidine 83 each coordinate (2E)-4-hydroxy-3-methylbut-2-enyl diphosphate. Positions 50 and 83 each coordinate dimethylallyl diphosphate. Isopentenyl diphosphate is bound by residues histidine 50 and histidine 83. A [4Fe-4S] cluster-binding site is contributed by cysteine 105. Histidine 133 contributes to the (2E)-4-hydroxy-3-methylbut-2-enyl diphosphate binding site. Residue histidine 133 participates in dimethylallyl diphosphate binding. Histidine 133 provides a ligand contact to isopentenyl diphosphate. Glutamate 135 serves as the catalytic Proton donor. Threonine 173 provides a ligand contact to (2E)-4-hydroxy-3-methylbut-2-enyl diphosphate. [4Fe-4S] cluster is bound at residue cysteine 203. (2E)-4-hydroxy-3-methylbut-2-enyl diphosphate contacts are provided by serine 231, serine 232, asparagine 233, and serine 275. The dimethylallyl diphosphate site is built by serine 231, serine 232, asparagine 233, and serine 275. 4 residues coordinate isopentenyl diphosphate: serine 231, serine 232, asparagine 233, and serine 275.

Belongs to the IspH family. Requires [4Fe-4S] cluster as cofactor.

The enzyme catalyses isopentenyl diphosphate + 2 oxidized [2Fe-2S]-[ferredoxin] + H2O = (2E)-4-hydroxy-3-methylbut-2-enyl diphosphate + 2 reduced [2Fe-2S]-[ferredoxin] + 2 H(+). The catalysed reaction is dimethylallyl diphosphate + 2 oxidized [2Fe-2S]-[ferredoxin] + H2O = (2E)-4-hydroxy-3-methylbut-2-enyl diphosphate + 2 reduced [2Fe-2S]-[ferredoxin] + 2 H(+). The protein operates within isoprenoid biosynthesis; dimethylallyl diphosphate biosynthesis; dimethylallyl diphosphate from (2E)-4-hydroxy-3-methylbutenyl diphosphate: step 1/1. Its pathway is isoprenoid biosynthesis; isopentenyl diphosphate biosynthesis via DXP pathway; isopentenyl diphosphate from 1-deoxy-D-xylulose 5-phosphate: step 6/6. Catalyzes the conversion of 1-hydroxy-2-methyl-2-(E)-butenyl 4-diphosphate (HMBPP) into a mixture of isopentenyl diphosphate (IPP) and dimethylallyl diphosphate (DMAPP). Acts in the terminal step of the DOXP/MEP pathway for isoprenoid precursor biosynthesis. This chain is 4-hydroxy-3-methylbut-2-enyl diphosphate reductase, found in Bordetella pertussis (strain Tohama I / ATCC BAA-589 / NCTC 13251).